Here is a 698-residue protein sequence, read N- to C-terminus: Epithelial sodium channel subunit alpha (698 aa).

A disordered region spans residues Met-1–Glu-70. The Cytoplasmic segment spans residues Met-1–Ala-110. A helical membrane pass occupies residues Phe-111–Phe-131. The Extracellular portion of the chain corresponds to Glu-132–Ser-589. Disulfide bonds link Cys-158/Cys-332, Cys-256/Cys-263, and Cys-309/Cys-316. Residue Asn-190 is glycosylated (N-linked (GlcNAc...) asparagine). The interval Arg-200–Ser-270 is gating release of inhibition by proteolysis (GRIP); protease-sensitive region that is responsible for the proteolytic activation of the channel. Residues His-213–Gln-243 form a disordered region. A compositionally biased stretch (polar residues) spans Thr-229 to Gln-243. An N-linked (GlcNAc...) asparagine glycan is attached at Asn-259. N-linked (GlcNAc...) asparagine glycosylation is found at Asn-320, Asn-339, and Asn-424. 7 disulfide bridges follow: Cys-421–Cys-506, Cys-443–Cys-483, Cys-443–Cys-502, Cys-447–Cys-498, Cys-456–Cys-483, Cys-456–Cys-506, and Cys-458–Cys-472. The N-linked (GlcNAc...) asparagine glycan is linked to Asn-538. The chain crosses the membrane as a helical span at residues Val-590–Met-610. Topologically, residues Leu-611–Leu-698 are cytoplasmic. The tract at residues Ala-637 to Pro-663 is disordered. The short motif at Pro-669–Tyr-673 is the PY motif; recruits WW domain-containing proteins and is thereby required for ubiquitination and inhibition of the channel by NEDD4 and NEDD4L element.

The protein belongs to the amiloride-sensitive sodium channel (TC 1.A.6) family. SCNN1A subfamily. In terms of assembly, heterotrimer; containing an alpha/SCNN1A, a beta/SCNN1B and a gamma/SCNN1G subunit. Interacts with WWP1 (via WW domains). Interacts with WWP2 (via WW domains); inhibits the channel. Interacts with BPIFA1; the interaction is indirect via SCNN1B and inhibits the proteolytic processing of SCNN1A and SCNN1G and the activation of ENaC. Interacts with the full-length immature form of PCSK9 (pro-PCSK9). In terms of processing, ubiquitinated. Can be ubiquitinated at multiple sites and undergo monoubiquitination and polyubiquitination. Ubiquitination by NEDD4 or NEDD4L inhibits the ENaC channel through endocytosis, intracellular retention and degradation of its individual subunits. Post-translationally, N-glycosylated. ENaC is activated through the proteolytic maturation of its subunits. Furin cleaves the SCNN1A subunit, which results in a stepwise increase in the open probability of the channel due to the release of an inhibitory tract. BPIFA1, which is recruited by the SCNN1B subunit, prevents the proteolytic activation of ENaC. In terms of tissue distribution, detected in kidney, lung and testis (at protein level). In the testis, detected within the seminiferous tubules but not in the interstitial cells (at protein level).

The protein resides in the apical cell membrane. It is found in the cell projection. It localises to the cilium. The protein localises to the cytoplasmic granule. Its subcellular location is the cytoplasm. The protein resides in the cytoplasmic vesicle. It is found in the secretory vesicle. It localises to the acrosome. The protein localises to the flagellum. It catalyses the reaction Na(+)(in) = Na(+)(out). With respect to regulation, originally identified and characterized by its inhibition by the diuretic drug amiloride. In terms of biological role, this is one of the three pore-forming subunits of the heterotrimeric epithelial sodium channel (ENaC), a critical regulator of sodium balance and fluid homeostasis. ENaC operates in epithelial tissues, where it mediates the electrodiffusion of sodium ions from extracellular fluid through the apical membrane of cells, with water following osmotically. It plays a key role in maintaining sodium homeostasis through electrogenic sodium reabsorption in the kidneys. Additionally, ENaC is essential for airway surface liquid homeostasis, which is crucial for proper mucus clearance. This chain is Epithelial sodium channel subunit alpha, found in Rattus norvegicus (Rat).